The chain runs to 128 residues: Iron-sulfur cluster insertion protein ErpA (128 aa).

Residues Cys-56, Cys-120, and Cys-122 each contribute to the iron-sulfur cluster site.

This sequence belongs to the HesB/IscA family. In terms of assembly, homodimer. The cofactor is iron-sulfur cluster.

Its function is as follows. Required for insertion of 4Fe-4S clusters for at least IspG. This is Iron-sulfur cluster insertion protein ErpA from Xanthomonas euvesicatoria pv. vesicatoria (strain 85-10) (Xanthomonas campestris pv. vesicatoria).